We begin with the raw amino-acid sequence, 327 residues long: Biotin synthase (327 aa).

The region spanning 49-282 is the Radical SAM core domain; it reads FNKEKIDLCS…NKVIRLCGGR (234 aa). [4Fe-4S] cluster contacts are provided by Cys-67, Cys-71, and Cys-74. [2Fe-2S] cluster is bound by residues Ser-110, Cys-142, Cys-201, and Arg-277.

The protein belongs to the radical SAM superfamily. Biotin synthase family. In terms of assembly, homodimer. [4Fe-4S] cluster is required as a cofactor. [2Fe-2S] cluster serves as cofactor.

The enzyme catalyses (4R,5S)-dethiobiotin + (sulfur carrier)-SH + 2 reduced [2Fe-2S]-[ferredoxin] + 2 S-adenosyl-L-methionine = (sulfur carrier)-H + biotin + 2 5'-deoxyadenosine + 2 L-methionine + 2 oxidized [2Fe-2S]-[ferredoxin]. Its pathway is cofactor biosynthesis; biotin biosynthesis; biotin from 7,8-diaminononanoate: step 2/2. Catalyzes the conversion of dethiobiotin (DTB) to biotin by the insertion of a sulfur atom into dethiobiotin via a radical-based mechanism. The protein is Biotin synthase of Methanococcus maripaludis (strain DSM 14266 / JCM 13030 / NBRC 101832 / S2 / LL).